Consider the following 349-residue polypeptide: tRNA (guanine(26)-N(2))-dimethyltransferase (349 aa).

The region spanning 1-343 is the Trm1 methyltransferase domain; it reads MEVEEGRARV…ADRDVVVKIL (343 aa). The S-adenosyl-L-methionine site is built by arginine 25, arginine 50, aspartate 66, aspartate 92, and alanine 93.

It belongs to the class I-like SAM-binding methyltransferase superfamily. Trm1 family.

It catalyses the reaction guanosine(26) in tRNA + 2 S-adenosyl-L-methionine = N(2)-dimethylguanosine(26) in tRNA + 2 S-adenosyl-L-homocysteine + 2 H(+). Its function is as follows. Dimethylates a single guanine residue at position 26 of a number of tRNAs using S-adenosyl-L-methionine as donor of the methyl groups. This is tRNA (guanine(26)-N(2))-dimethyltransferase from Archaeoglobus fulgidus (strain ATCC 49558 / DSM 4304 / JCM 9628 / NBRC 100126 / VC-16).